A 228-amino-acid polypeptide reads, in one-letter code: MAKDTTGRLRVTVKTGGKRKLSSKLWLERQLNDPYVAQAKRDGWRSRAAYKLIEMDDKYHFLKPGLAVVDLGAAPGGWSQVAARRVGAVDGKGKVVAIDLLEMPEIVGVTFARLDFLDADAPEKLIAMMEGGADIVLSDMAANTTGHRKTDQLRIIGLVESAAAFAADVLRPGGTFIAKVFQSGADADLLVQLKRDFRTVRHVKPASSRQDSSERYVMATGFRGTPAV.

5 residues coordinate S-adenosyl-L-methionine: Gly76, Trp78, Asp99, Asp115, and Asp139. Lys179 (proton acceptor) is an active-site residue.

The protein belongs to the class I-like SAM-binding methyltransferase superfamily. RNA methyltransferase RlmE family.

Its subcellular location is the cytoplasm. The enzyme catalyses uridine(2552) in 23S rRNA + S-adenosyl-L-methionine = 2'-O-methyluridine(2552) in 23S rRNA + S-adenosyl-L-homocysteine + H(+). Its function is as follows. Specifically methylates the uridine in position 2552 of 23S rRNA at the 2'-O position of the ribose in the fully assembled 50S ribosomal subunit. The sequence is that of Ribosomal RNA large subunit methyltransferase E from Nitrobacter hamburgensis (strain DSM 10229 / NCIMB 13809 / X14).